The chain runs to 120 residues: Large ribosomal subunit protein uL18 (120 aa).

Belongs to the universal ribosomal protein uL18 family. As to quaternary structure, part of the 50S ribosomal subunit; part of the 5S rRNA/L5/L18/L25 subcomplex. Contacts the 5S and 23S rRNAs.

Its function is as follows. This is one of the proteins that bind and probably mediate the attachment of the 5S RNA into the large ribosomal subunit, where it forms part of the central protuberance. This is Large ribosomal subunit protein uL18 from Finegoldia magna (strain ATCC 29328 / DSM 20472 / WAL 2508) (Peptostreptococcus magnus).